Consider the following 264-residue polypeptide: 5'-nucleotidase SurE (264 aa).

Positions 8, 9, 41, and 98 each coordinate a divalent metal cation.

Belongs to the SurE nucleotidase family. It depends on a divalent metal cation as a cofactor.

The protein localises to the cytoplasm. The enzyme catalyses a ribonucleoside 5'-phosphate + H2O = a ribonucleoside + phosphate. Nucleotidase that shows phosphatase activity on nucleoside 5'-monophosphates. This is 5'-nucleotidase SurE from Carboxydothermus hydrogenoformans (strain ATCC BAA-161 / DSM 6008 / Z-2901).